A 321-amino-acid polypeptide reads, in one-letter code: Acetyl-coenzyme A carboxylase carboxyl transferase subunit alpha (321 aa).

Residues Arg39 to Gln293 enclose the CoA carboxyltransferase C-terminal domain.

Belongs to the AccA family. Acetyl-CoA carboxylase is a heterohexamer composed of biotin carboxyl carrier protein (AccB), biotin carboxylase (AccC) and two subunits each of ACCase subunit alpha (AccA) and ACCase subunit beta (AccD).

The protein localises to the cytoplasm. The catalysed reaction is N(6)-carboxybiotinyl-L-lysyl-[protein] + acetyl-CoA = N(6)-biotinyl-L-lysyl-[protein] + malonyl-CoA. Its pathway is lipid metabolism; malonyl-CoA biosynthesis; malonyl-CoA from acetyl-CoA: step 1/1. Its function is as follows. Component of the acetyl coenzyme A carboxylase (ACC) complex. First, biotin carboxylase catalyzes the carboxylation of biotin on its carrier protein (BCCP) and then the CO(2) group is transferred by the carboxyltransferase to acetyl-CoA to form malonyl-CoA. This Bordetella bronchiseptica (strain ATCC BAA-588 / NCTC 13252 / RB50) (Alcaligenes bronchisepticus) protein is Acetyl-coenzyme A carboxylase carboxyl transferase subunit alpha.